The primary structure comprises 196 residues: Putative NADH dehydrogenase/NAD(P)H nitroreductase SGR_2476 (196 aa).

This sequence belongs to the nitroreductase family. HadB/RutE subfamily. FMN serves as cofactor.

The protein is Putative NADH dehydrogenase/NAD(P)H nitroreductase SGR_2476 of Streptomyces griseus subsp. griseus (strain JCM 4626 / CBS 651.72 / NBRC 13350 / KCC S-0626 / ISP 5235).